The following is a 141-amino-acid chain: Hemoglobin subunit alpha (141 aa).

The Globin domain maps to 1–141 (VLSPADKTNI…VSTVLVSKYR (141 aa)). Ser3 carries the post-translational modification Phosphoserine. Lys7 carries the N6-succinyllysine modification. At Thr8 the chain carries Phosphothreonine. Lys11 bears the N6-succinyllysine mark. Residue Lys16 is modified to N6-acetyllysine; alternate. Lys16 is modified (N6-succinyllysine; alternate). Residue Tyr24 is modified to Phosphotyrosine. Position 35 is a phosphoserine (Ser35). Lys40 is subject to N6-succinyllysine. Ser49 is subject to Phosphoserine. His58 lines the O2 pocket. Heme b is bound at residue His87. The residue at position 102 (Ser102) is a Phosphoserine. Position 108 is a phosphothreonine (Thr108). Residues Ser124 and Ser131 each carry the phosphoserine modification. Thr134 carries the post-translational modification Phosphothreonine. The residue at position 138 (Ser138) is a Phosphoserine.

It belongs to the globin family. In terms of assembly, heterotetramer of two alpha chains and two beta chains. As to expression, red blood cells.

In terms of biological role, involved in oxygen transport from the lung to the various peripheral tissues. Its function is as follows. Hemopressin acts as an antagonist peptide of the cannabinoid receptor CNR1. Hemopressin-binding efficiently blocks cannabinoid receptor CNR1 and subsequent signaling. The protein is Hemoglobin subunit alpha (HBA) of Myotis velifer (Mouse-eared bat).